A 146-amino-acid polypeptide reads, in one-letter code: Decoration protein (146 aa).

As to quaternary structure, homotrimer. Interacts with the major capsid protein.

Its subcellular location is the virion. In terms of biological role, cooperatively binds the expanded capsid, thereby stabilizing the mature capsid shell and allowing the large viral DNA to be packaged. Trimers of capsid decoration proteins molecules are located at local and icosahedral threefold axes and stabilize the expanded capsid, which shows increased spacing between capsomers. This Thermus thermophilus (Thermus thermophilus phage P23-45) protein is Decoration protein.